The following is a 104-amino-acid chain: Type IV secretion system protein PtlB homolog (104 aa).

A helical transmembrane segment spans residues 30 to 50 (IALLGIWFSIAFLALFPVALL).

Belongs to the virB3 family.

Its subcellular location is the cell membrane. The protein is Type IV secretion system protein PtlB homolog (ptlB) of Bordetella parapertussis (strain 12822 / ATCC BAA-587 / NCTC 13253).